A 784-amino-acid polypeptide reads, in one-letter code: Homeobox-leucine zipper protein ROC2 (784 aa).

Residues 60 to 113 (AESGDNMIRSRASDPLGGDEFESKSGSENVDGVSVDDQDPNQRPRKKRYHRHTQ) form a disordered region. Residues 102–113 (RPRKKRYHRHTQ) show a composition bias toward basic residues. The segment at residues 104–163 (RKKRYHRHTQHQIQEMEAFFKECPHPDDKQRKELSRELGLEPLQVKFWFQNKRTQMKNQH) is a DNA-binding region (homeobox). Positions 158–234 (QMKNQHERHE…DRISAIAAKY (77 aa)) form a coiled coil. Residues 286-523 (SEVDKPMIVE…LDRQCERLAS (238 aa)) enclose the START domain.

The protein belongs to the HD-ZIP homeobox family. Class IV subfamily.

It localises to the nucleus. Probable transcription factor. This Oryza sativa subsp. japonica (Rice) protein is Homeobox-leucine zipper protein ROC2 (ROC2).